A 326-amino-acid chain; its full sequence is Porin-like protein H (326 aa).

The N-terminal stretch at 1–19 (MKKTLVALAILTAAGSANA) is a signal peptide.

It belongs to the Gram-negative porin family. In terms of assembly, oligomer.

Its subcellular location is the cell outer membrane. Its function is as follows. Forms pores that allow passive diffusion of small molecules across the outer membrane. The polypeptide is Porin-like protein H (ompH) (Photobacterium profundum (strain SS9)).